Consider the following 94-residue polypeptide: Large ribosomal subunit protein bL28A (94 aa).

Positions Gly-63–Leu-94 are disordered. The segment covering Arg-72 to Arg-82 has biased composition (low complexity). A compositionally biased stretch (polar residues) spans Ala-84–Leu-94.

Belongs to the bacterial ribosomal protein bL28 family.

This is Large ribosomal subunit protein bL28A (rpmB1) from Mycobacterium bovis (strain ATCC BAA-935 / AF2122/97).